Reading from the N-terminus, the 221-residue chain is Protein GrpE 1 (221 aa).

Disordered regions lie at residues 1-44 and 192-221; these read MTEE…AAAQ and VAEP…PEEG. Residues 26-44 show a composition bias toward low complexity; the sequence is KAAPSEGAAPAGDAAAAAQ. A compositionally biased stretch (basic and acidic residues) spans 203–221; that stretch reads KADEAEAADDKESGGPEEG.

The protein belongs to the GrpE family. As to quaternary structure, homodimer.

It is found in the cytoplasm. Functionally, participates actively in the response to hyperosmotic and heat shock by preventing the aggregation of stress-denatured proteins, in association with DnaK and GrpE. It is the nucleotide exchange factor for DnaK and may function as a thermosensor. Unfolded proteins bind initially to DnaJ; upon interaction with the DnaJ-bound protein, DnaK hydrolyzes its bound ATP, resulting in the formation of a stable complex. GrpE releases ADP from DnaK; ATP binding to DnaK triggers the release of the substrate protein, thus completing the reaction cycle. Several rounds of ATP-dependent interactions between DnaJ, DnaK and GrpE are required for fully efficient folding. The polypeptide is Protein GrpE 1 (Streptomyces avermitilis (strain ATCC 31267 / DSM 46492 / JCM 5070 / NBRC 14893 / NCIMB 12804 / NRRL 8165 / MA-4680)).